Reading from the N-terminus, the 300-residue chain is 4-hydroxy-tetrahydrodipicolinate synthase (300 aa).

Thr46 contributes to the pyruvate binding site. The Proton donor/acceptor role is filled by Tyr134. Catalysis depends on Lys162, which acts as the Schiff-base intermediate with substrate. Val204 contributes to the pyruvate binding site.

Belongs to the DapA family. In terms of assembly, homotetramer; dimer of dimers.

The protein resides in the cytoplasm. It catalyses the reaction L-aspartate 4-semialdehyde + pyruvate = (2S,4S)-4-hydroxy-2,3,4,5-tetrahydrodipicolinate + H2O + H(+). Its pathway is amino-acid biosynthesis; L-lysine biosynthesis via DAP pathway; (S)-tetrahydrodipicolinate from L-aspartate: step 3/4. Functionally, catalyzes the condensation of (S)-aspartate-beta-semialdehyde [(S)-ASA] and pyruvate to 4-hydroxy-tetrahydrodipicolinate (HTPA). The polypeptide is 4-hydroxy-tetrahydrodipicolinate synthase (Heliobacterium modesticaldum (strain ATCC 51547 / Ice1)).